The chain runs to 324 residues: NADH-ubiquinone oxidoreductase chain 1 (324 aa).

9 helical membrane-spanning segments follow: residues 9-29 (LINP…LTLI), 43-63 (PNIV…KLFI), 77-97 (FLAT…PLPL), 106-126 (LGLL…LGSG), 146-166 (ISYE…AGGF), 177-197 (TIWL…STLA), 228-248 (LFFL…VILF), 259-279 (QISS…FLWI), and 299-319 (FLPL…ATTS).

It belongs to the complex I subunit 1 family.

The protein localises to the mitochondrion inner membrane. It catalyses the reaction a ubiquinone + NADH + 5 H(+)(in) = a ubiquinol + NAD(+) + 4 H(+)(out). Functionally, core subunit of the mitochondrial membrane respiratory chain NADH dehydrogenase (Complex I) that is believed to belong to the minimal assembly required for catalysis. Complex I functions in the transfer of electrons from NADH to the respiratory chain. The immediate electron acceptor for the enzyme is believed to be ubiquinone. The protein is NADH-ubiquinone oxidoreductase chain 1 (MT-ND1) of Scyliorhinus canicula (Small-spotted catshark).